A 276-amino-acid polypeptide reads, in one-letter code: Aliphatic sulfonates import ATP-binding protein SsuB 1 (276 aa).

The segment at 1–21 (MSTGNVTTLRRPEAPPSLPAG) is disordered. In terms of domain architecture, ABC transporter spans 39–259 (FSFRNVTKSF…RHGTPEFARL (221 aa)). 71–78 (GKSGCGKS) is an ATP binding site.

It belongs to the ABC transporter superfamily. Aliphatic sulfonates importer (TC 3.A.1.17.2) family. In terms of assembly, the complex is composed of two ATP-binding proteins (SsuB), two transmembrane proteins (SsuC) and a solute-binding protein (SsuA).

Its subcellular location is the cell inner membrane. The enzyme catalyses ATP + H2O + aliphatic sulfonate-[sulfonate-binding protein]Side 1 = ADP + phosphate + aliphatic sulfonateSide 2 + [sulfonate-binding protein]Side 1.. In terms of biological role, part of the ABC transporter complex SsuABC involved in aliphatic sulfonates import. Responsible for energy coupling to the transport system. This is Aliphatic sulfonates import ATP-binding protein SsuB 1 from Agrobacterium fabrum (strain C58 / ATCC 33970) (Agrobacterium tumefaciens (strain C58)).